Here is a 23-residue protein sequence, read N- to C-terminus: Dermaseptin III-like peptide (23 aa).

In terms of tissue distribution, expressed by the skin glands.

It is found in the secreted. Functionally, possesses a potent antimicrobial activity against bacteria, fungi and protozoa. Probably acts by disturbing membrane functions with its amphipathic structure. This is Dermaseptin III-like peptide from Phyllomedusa burmeisteri (Brazilian common walking leaf frog).